Consider the following 538-residue polypeptide: Cytochrome P450 monooxygenase claM (538 aa).

Residues 36–56 form a helical membrane-spanning segment; sequence LSIGLVVLIGAISSFLLQQFL. N-linked (GlcNAc...) asparagine glycans are attached at residues asparagine 306 and asparagine 425. Cysteine 472 lines the heme pocket.

Belongs to the cytochrome P450 family. Heme is required as a cofactor.

The protein localises to the membrane. The catalysed reaction is 2 nataloe emodin + reduced [NADPH--hemoprotein reductase] + O2 = cladofulvin + oxidized [NADPH--hemoprotein reductase] + 2 H2O + H(+). It participates in pigment biosynthesis. In terms of biological role, cytochrome P450 monooxygenase; part of the gene cluster that mediates the biosynthesis of the bianthraquinone cladofulvin, a conidial pigment not required for virulence but that plays a role in fitness and resistance to environmental stresses including UV light and low-temperature stress. The pathway begins with the synthesis of atrochrysone thioester by the polyketide synthase (PKS) claG. The atrochrysone carboxyl ACP thioesterase claF then breaks the thioester bond and releases the atrochrysone carboxylic acid from claG. This compound is decarboxylated by claH to yield emodin, which is further converted to chrysophanol hydroquinone by the reductase claC and the dehydratase claB. The cytochrome monooxygenase P450 claM then catalyzes the dimerization of nataloe-emodin to cladofulvin. This Passalora fulva (Tomato leaf mold) protein is Cytochrome P450 monooxygenase claM.